A 214-amino-acid polypeptide reads, in one-letter code: Orotate phosphoribosyltransferase (214 aa).

Residue Lys26 coordinates 5-phospho-alpha-D-ribose 1-diphosphate. 34–35 is a binding site for orotate; the sequence is FF. Residues 72 to 73, Arg99, Lys100, Lys103, His105, and 124 to 132 contribute to the 5-phospho-alpha-D-ribose 1-diphosphate site; these read YK and DDVITAGTA. The orotate site is built by Thr128 and Arg157.

The protein belongs to the purine/pyrimidine phosphoribosyltransferase family. PyrE subfamily. As to quaternary structure, homodimer. It depends on Mg(2+) as a cofactor.

The enzyme catalyses orotidine 5'-phosphate + diphosphate = orotate + 5-phospho-alpha-D-ribose 1-diphosphate. It participates in pyrimidine metabolism; UMP biosynthesis via de novo pathway; UMP from orotate: step 1/2. Functionally, catalyzes the transfer of a ribosyl phosphate group from 5-phosphoribose 1-diphosphate to orotate, leading to the formation of orotidine monophosphate (OMP). The polypeptide is Orotate phosphoribosyltransferase (Pseudomonas fluorescens (strain Pf0-1)).